The primary structure comprises 149 residues: Nucleoside diphosphate kinase (149 aa).

The ATP site is built by lysine 9, phenylalanine 57, arginine 85, threonine 91, arginine 102, and asparagine 112. Histidine 115 (pros-phosphohistidine intermediate) is an active-site residue.

Belongs to the NDK family. As to quaternary structure, homotetramer. Mg(2+) serves as cofactor.

It localises to the cytoplasm. The catalysed reaction is a 2'-deoxyribonucleoside 5'-diphosphate + ATP = a 2'-deoxyribonucleoside 5'-triphosphate + ADP. It catalyses the reaction a ribonucleoside 5'-diphosphate + ATP = a ribonucleoside 5'-triphosphate + ADP. Its function is as follows. Major role in the synthesis of nucleoside triphosphates other than ATP. The ATP gamma phosphate is transferred to the NDP beta phosphate via a ping-pong mechanism, using a phosphorylated active-site intermediate. This chain is Nucleoside diphosphate kinase, found in Roseiflexus sp. (strain RS-1).